A 962-amino-acid polypeptide reads, in one-letter code: IQ motif and SEC7 domain-containing protein 1 (962 aa).

Residues 1–96 form a disordered region; that stretch reads MACRRRYLSS…STSVLRKQAE (96 aa). Positions 8 to 19 are enriched in low complexity; the sequence is LSSLETGSSLST. Positions 30-39 are enriched in polar residues; it reads SSETGTSLDS. Phosphoserine occurs at positions 89, 105, and 107. The IQ domain maps to 134 to 163; sequence TRHAARTIQTAFRQYQMNKNFERLRSSMSE. Phosphoserine is present on residues Ser180, Ser248, and Ser252. Disordered regions lie at residues 264–292, 311–333, and 348–516; these read SEEV…HRKL, LSPP…DLRL, and KEDK…DSPA. Residues 273 to 292 show a composition bias toward basic and acidic residues; sequence ARARDTEPKPGLHGMDHRKL. Composition is skewed to basic and acidic residues over residues 365–375 and 429–445; these read ERPEPRLRVEH and LPRE…RPLE. Residues 470-488 are compositionally biased toward low complexity; that stretch reads DSINSTSNSNDTINCSSES. Phosphoserine occurs at positions 511 and 514. Residues 516 to 709 form the SEC7 domain; the sequence is AFSNDVIRKR…IGIYERIRKR (194 aa). One can recognise a PH domain in the interval 773–865; that stretch reads HQREIFLFND…LRESVAEVQE (93 aa). At Ser891 the chain carries Phosphoserine. Phosphotyrosine is present on Tyr910. Residues 921 to 962 are disordered; it reads LSSSLRDLSEAGKRGRRSSAGSLESNVEFQPFQPSQPPVLCS. Residues Ser923 and Ser924 each carry the phosphoserine modification. The span at 939–948 shows a compositional bias: polar residues; it reads SAGSLESNVE.

The protein belongs to the BRAG family. Interacts with ARF1 and ARF6. Interacts with GRIA2; the interaction is required for ARF6 activation.

The protein resides in the cytoplasm. It is found in the nucleus. It localises to the postsynaptic density. The protein localises to the cytoplasmic vesicle. Its subcellular location is the secretory vesicle. The protein resides in the synaptic vesicle. Its function is as follows. Guanine nucleotide exchange factor for ARF1 and ARF6. Guanine nucleotide exchange factor activity is enhanced by lipid binding. Accelerates GTP binding by ARFs of all three classes. Guanine nucleotide exchange protein for ARF6, mediating internalization of beta-1 integrin. Involved in neuronal development. In neurons, plays a role in the control of vesicle formation by endocytoc cargo. Upon long term depression, interacts with GRIA2 and mediates the activation of ARF6 to internalize synaptic AMPAR receptors. This is IQ motif and SEC7 domain-containing protein 1 from Rattus norvegicus (Rat).